The sequence spans 182 residues: dCTP deaminase, dUMP-forming (182 aa).

Residues 96-101 (RSSIGR), Asp-113, 121-123 (TLE), Gln-142, Tyr-156, and Gln-163 contribute to the dCTP site. Glu-123 (proton donor/acceptor) is an active-site residue.

This sequence belongs to the dCTP deaminase family. In terms of assembly, homotrimer.

The enzyme catalyses dCTP + 2 H2O = dUMP + NH4(+) + diphosphate. It participates in pyrimidine metabolism; dUMP biosynthesis; dUMP from dCTP: step 1/1. Bifunctional enzyme that catalyzes both the deamination of dCTP to dUTP and the hydrolysis of dUTP to dUMP without releasing the toxic dUTP intermediate. The sequence is that of dCTP deaminase, dUMP-forming from Halothermothrix orenii (strain H 168 / OCM 544 / DSM 9562).